A 485-amino-acid chain; its full sequence is Glutamyl-tRNA(Gln) amidotransferase subunit A (485 aa).

Catalysis depends on charge relay system residues K78 and S153. The Acyl-ester intermediate role is filled by S177.

Belongs to the amidase family. GatA subfamily. As to quaternary structure, heterotrimer of A, B and C subunits.

The catalysed reaction is L-glutamyl-tRNA(Gln) + L-glutamine + ATP + H2O = L-glutaminyl-tRNA(Gln) + L-glutamate + ADP + phosphate + H(+). Allows the formation of correctly charged Gln-tRNA(Gln) through the transamidation of misacylated Glu-tRNA(Gln) in organisms which lack glutaminyl-tRNA synthetase. The reaction takes place in the presence of glutamine and ATP through an activated gamma-phospho-Glu-tRNA(Gln). This Desulfotalea psychrophila (strain LSv54 / DSM 12343) protein is Glutamyl-tRNA(Gln) amidotransferase subunit A.